Consider the following 146-residue polypeptide: Ankyrin repeat-containing protein P16F5.05c (146 aa).

ANK repeat units follow at residues 1–31 (MDVD…ELSR), 35–64 (NGNS…KEVI), 70–99 (SGNT…DPHI), and 103–132 (YEKS…AKGS).

The protein resides in the cytoplasm. It is found in the nucleus. This is Ankyrin repeat-containing protein P16F5.05c from Schizosaccharomyces pombe (strain 972 / ATCC 24843) (Fission yeast).